We begin with the raw amino-acid sequence, 284 residues long: Release factor glutamine methyltransferase (284 aa).

Residues 121-125 (GTGTG), aspartate 144, tryptophan 172, and asparagine 188 each bind S-adenosyl-L-methionine. 188–191 (NPPY) is a substrate binding site.

The protein belongs to the protein N5-glutamine methyltransferase family. PrmC subfamily.

The enzyme catalyses L-glutaminyl-[peptide chain release factor] + S-adenosyl-L-methionine = N(5)-methyl-L-glutaminyl-[peptide chain release factor] + S-adenosyl-L-homocysteine + H(+). Functionally, methylates the class 1 translation termination release factors RF1/PrfA and RF2/PrfB on the glutamine residue of the universally conserved GGQ motif. The chain is Release factor glutamine methyltransferase from Aliivibrio fischeri (strain ATCC 700601 / ES114) (Vibrio fischeri).